The chain runs to 249 residues: MILELDCGNSFIKWRVIHVADAVIEGGGIVDSDQALVAEVAALASVRLTGCRIVSVRSEEETDALCALIAQAFAVQAKVAHPVREMAGVRNGYDDYQRLGMDRWLAALGAFHLAKGACLVIDLGTAAKADFVSADGEHLGGYICPGMPLMRSQLRTHTRRIRYDDASAERALSSLSPGRSTVEAVERGCVLMLQGFAYTQLEQARVLWGEEFTVFLTGGDAPLVRAALPQARVVPDLVFVGLAMACPLD.

6 to 13 provides a ligand contact to ATP; that stretch reads DCGNSFIK. Substrate-binding positions include Y93 and 100 to 103; that span reads GMDR. D102 acts as the Proton acceptor in catalysis. D122 contacts K(+). T125 contacts ATP. Residue T181 participates in substrate binding.

This sequence belongs to the type III pantothenate kinase family. As to quaternary structure, homodimer. The cofactor is NH4(+). It depends on K(+) as a cofactor.

It localises to the cytoplasm. The enzyme catalyses (R)-pantothenate + ATP = (R)-4'-phosphopantothenate + ADP + H(+). It participates in cofactor biosynthesis; coenzyme A biosynthesis; CoA from (R)-pantothenate: step 1/5. Catalyzes the phosphorylation of pantothenate (Pan), the first step in CoA biosynthesis. In Pseudomonas putida (strain ATCC 47054 / DSM 6125 / CFBP 8728 / NCIMB 11950 / KT2440), this protein is Type III pantothenate kinase.